Here is a 148-residue protein sequence, read N- to C-terminus: Urease accessory protein UreE (148 aa).

This sequence belongs to the UreE family.

It is found in the cytoplasm. Functionally, involved in urease metallocenter assembly. Binds nickel. Probably functions as a nickel donor during metallocenter assembly. The sequence is that of Urease accessory protein UreE from Nostoc punctiforme (strain ATCC 29133 / PCC 73102).